A 5141-amino-acid chain; its full sequence is SCO-spondin (5141 aa).

The signal sequence occupies residues 1 to 17 (MLLPALLFGMLWAPANG). The 85-residue stretch at 18-102 (HWCEQIETVH…ACCPGWGGIH (85 aa)) folds into the EMI domain. N-linked (GlcNAc...) asparagine glycans are attached at residues N88, N130, N150, and N167. One can recognise a VWFD 1 domain in the interval 193 to 364 (ATCATWSGFH…RLPGYEPGCL (172 aa)). Cystine bridges form between C195-C325, C217-C363, and C239-C245. The region spanning 472–527 (CPGGQLYSDCISSCPPSCSAVAQGEEGSCGKECVSGCECPTGLFWDGALCVPAAHC) is the TIL 1 domain. The region spanning 565-738 (AECAVGGDGH…FQVSGDGRCP (174 aa)) is the VWFD 2 domain. Cystine bridges form between C567–C700 and C591–C737. Residues N657 and N822 are each glycosylated (N-linked (GlcNAc...) asparagine). The TIL 2 domain maps to 830–883 (CPGGQVYQECAPACGHYCGEPEDCKELGSCVAGCNCPPGLLWDLEGQCVPPSMC). Residues N895, N949, and N991 are each glycosylated (N-linked (GlcNAc...) asparagine). The region spanning 1017 to 1187 (GWCQASGAPH…HSWRLNPLCP (171 aa)) is the VWFD 3 domain. Intrachain disulfides connect C1019-C1151, C1041-C1186, and C1062-C1069. The TIL 3 domain occupies 1280-1336 (CEGGQVYEPCGSTCPPTCHDHHPELRWHCQAITCVEGCFCPEGTLLHGGTCVELTDC). N1357 carries an N-linked (GlcNAc...) asparagine glycan. 4 LDL-receptor class A domains span residues 1380-1417 (GCAE…EGCD), 1420-1456 (VCGE…QGCL), 1456-1492 (LCPQ…ESCL), and 1496-1534 (SCTS…VHCS). 12 disulfide bridges follow: C1381–C1394, C1388–C1407, C1401–C1416, C1421–C1433, C1428–C1446, C1440–C1455, C1457–C1469, C1464–C1482, C1476–C1491, C1497–C1509, C1504–C1522, and C1516–C1533. Residues 1533–1567 (CSSPSLPTPPAGIGQNPSTSSPDTSPSPVGSASPA) form a disordered region. The segment covering 1549–1567 (PSTSSPDTSPSPVGSASPA) has biased composition (low complexity). LDL-receptor class A domains lie at 1569 to 1605 (PCSL…LDCG) and 1607 to 1646 (PCKL…DVCE). 6 cysteine pairs are disulfide-bonded: C1570–C1582, C1577–C1595, C1589–C1604, C1608–C1621, C1615–C1634, and C1628–C1645. 2 N-linked (GlcNAc...) asparagine glycosylation sites follow: N1655 and N1668. The region spanning 1660–1700 (PCPEFSCPNGTCIDFLLVCDGSPDCELADETEPSLDEQGCG) is the LDL-receptor class A 7 domain. 9 cysteine pairs are disulfide-bonded: C1661/C1671, C1666/C1684, C1678/C1699, C1711/C1747, C1715/C1752, C1726/C1737, C1767/C1964, C1771/C1969, and C1781/C1791. 2 consecutive TSP type-1 domains span residues 1699–1753 (CGTW…EACP) and 1755–1970 (DGEW…EPCE). N1725 is a glycosylation site (N-linked (GlcNAc...) asparagine). N-linked (GlcNAc...) asparagine glycosylation is present at N1814. EGF-like domains follow at residues 1829 to 1868 (CPLT…GRCV) and 1869 to 1895 (RPRQ…CQLC). Positions 1970–2030 (EGCEQWGLTY…GMGESCCHCA (61 aa)) constitute a VWFC 1 domain. A glycan (N-linked (GlcNAc...) asparagine) is linked at N2035. Intrachain disulfides connect C2070-C2226, C2236-C2248, C2243-C2261, and C2255-C2270. In terms of domain architecture, F5/8 type C spans 2070–2226 (CYSPLGLAGL…IFLWVELLGC (157 aa)). The tract at residues 2087 to 2109 (PLEHSTRAAPVEAPTAGPGPRED) is disordered. Residues N2130 and N2148 are each glycosylated (N-linked (GlcNAc...) asparagine). Positions 2235–2271 (LCPGTRHRCANGDCALKGGPCDGAVDCEDGSDEEGCG) constitute an LDL-receptor class A 8 domain. Residues 2262–2335 (EDGSDEEGCG…SPSASEGLLP (74 aa)) form a disordered region. The segment covering 2276–2294 (STASRVHSTARTPALSPTQ) has biased composition (polar residues). Over residues 2301–2314 (HPREGLADMEHQQP) the composition is skewed to basic and acidic residues. LDL-receptor class A domains are found at residues 2391-2427 (RCGP…QHCA) and 2448-2484 (LCSP…DDCV). Intrachain disulfides connect C2392–C2404, C2399–C2417, C2411–C2426, C2449–C2461, C2456–C2474, C2468–C2483, C2486–C2522, C2497–C2501, C2532–C2537, C2552–C2589, C2556–C2594, and C2567–C2579. TSP type-1 domains follow at residues 2485–2538 (DCVL…QACP) and 2540–2595 (AGAW…QLCP). Positions 2618–2660 (PPCPPSCLDPEANRSCSGHCVEGCRCPPGLFLQDSHCLPLSEC) constitute a TIL 4 domain. N-linked (GlcNAc...) asparagine glycosylation is found at N2630 and N2679. TSP type-1 domains lie at 2700–2754 (SCGW…TDCG), 2758–2813 (PGWT…SLCP), and 2815–2868 (PSAW…HPCT). 9 cysteine pairs are disulfide-bonded: C2701-C2739, C2712-C2716, C2749-C2753, C2769-C2807, C2773-C2812, C2789-C2797, C2827-C2862, C2831-C2867, and C2842-C2852. Residues N2921 and N2951 are each glycosylated (N-linked (GlcNAc...) asparagine). TSP type-1 domains follow at residues 2969–3024 (ACGW…RPCQ) and 3025–3068 (GPGA…QPCA). Intrachain disulfides connect C2970–C3008, C2981–C2985, and C3018–C3023. N3046, N3101, N3148, and N3158 each carry an N-linked (GlcNAc...) asparagine glycan. One can recognise a TIL 5 domain in the interval 3075-3127 (CPKDQQWLDCAQGPASCAHLSTPREANQTCHPGCYCLSGMLLLNNVCVPAQDC). 2 TSP type-1 domains span residues 3168–3235 (QPAW…PGCN) and 3237–3292 (AGVW…QPCP). Intrachain disulfides connect C3180/C3229, C3184/C3234, C3195/C3219, C3249/C3286, C3253/C3291, and C3264/C3276. N-linked (GlcNAc...) asparagine glycosylation occurs at N3295. A TIL 6 domain is found at 3300 to 3350 (EGAEYSPCGPPCPRSCDDLVHCMWHCQPGCYCPPGKVLSADGAICVQPHHC). N-linked (GlcNAc...) asparagine glycosylation occurs at N3384. TSP type-1 domains lie at 3393-3455 (SGDW…TACP) and 3457-3512 (DGAW…TPCT). Cystine bridges form between C3405-C3448, C3409-C3454, C3420-C3432, C3469-C3504, C3472-C3511, and C3482-C3494. N3506 carries N-linked (GlcNAc...) asparagine glycosylation. The region spanning 3514 to 3570 (CGGGQDLLPCGQPCPHSCQDLSLGSTCQPGSSGCQSGCGCPPGQLSQDGLCVFPADC) is the TIL 7 domain. N-linked (GlcNAc...) asparagine glycosylation is found at N3584 and N3611. The TSP type-1 14 domain occupies 3630-3678 (PGIWSSWGPWEKCSVPCGGGEQLRSRQCARPPCPGLAQQSRTCHIHVCR). Disulfide bonds link C3642-C3672, C3646-C3677, and C3657-C3662. N3787 carries an N-linked (GlcNAc...) asparagine glycan. TSP type-1 domains follow at residues 3806–3862 (RGYF…PECP), 3876–3928 (AGGW…PSCT), 3942–3998 (NCFW…RACP), and 4000–4055 (PGGW…MPCE). 3 disulfides stabilise this stretch: C3818/C3856, C3822/C3861, and C3834/C3846. Residue N3910 is glycosylated (N-linked (GlcNAc...) asparagine). 6 disulfide bridges follow: C3943–C3979, C3954–C3958, C3992–C3997, C4012–C4049, C4016–C4054, and C4027–C4039. The TIL 8 domain maps to 4058 to 4113 (CPAGMEMVSCANRCPYSCSDLQEAVMCQEDQACQLGCRCSEGFLEQDGGCVPVGHC). N-linked (GlcNAc...) asparagine glycosylation is present at N4135. TSP type-1 domains lie at 4155 to 4208 (HCAW…DPCP), 4249 to 4304 (PGGW…QLCL), 4306 to 4362 (LLEI…GPCQ), and 4364 to 4418 (DCMW…GNCS). Disulfide bonds link C4156–C4192, C4167–C4171, C4202–C4207, C4261–C4298, C4265–C4303, and C4276–C4288. A glycan (N-linked (GlcNAc...) asparagine) is linked at N4345. 3 disulfide bridges follow: C4365–C4402, C4376–C4378, and C4412–C4417. An N-linked (GlcNAc...) asparagine glycan is attached at N4416. The TIL 9 domain maps to 4422 to 4477 (CLPPFEFQSCGSPCAGLCATHLSHQLCQDLPPCQPGCYCPMGLLEQDGGCILPEQC). N4557 carries an N-linked (GlcNAc...) asparagine glycan. The region spanning 4608–4659 (TCQWGPWGPWSPCQVPCSGGFKLRWREASDNSVGECRGPWAQTESCNMGSCP) is the TSP type-1 23 domain. 3 disulfide bridges follow: C4609-C4643, C4620-C4624, and C4653-C4658. The TIL 10 domain maps to 4673-4719 (DCANQCPRSCADLWEGVQCLQGPCSPGCRCPPGQLVQDGHCVPISSC). 3 N-linked (GlcNAc...) asparagine glycosylation sites follow: N4727, N4744, and N4749. The 54-residue stretch at 4759–4812 (CPVLGPWSPWSECSAVCGGGTMVRYRSCEEHPDSAPCQALDMEQRVECNLQTCP) folds into the TSP type-1 24 domain. 3 disulfides stabilise this stretch: C4771-C4806, C4775-C4811, and C4786-C4795. Residues 4814-4868 (CPPGQVLSTCATLCPSFCSHLWPGTICVREPCQLGCGCPGGQLLHSGTCIPPEAC) form the TIL 11 domain. Residues N4899, N4942, and N4949 are each glycosylated (N-linked (GlcNAc...) asparagine). Residues 4920–4978 (CPPGEILQLGELRPCEKTCLEMNKTQAWSNCTEAQVPGCVCQLGHFRSHTGLCVPEDHC) enclose the TIL 12 domain. The region spanning 4978–5036 (CECWHHGSPHLPGSEWQEACESCRCLHGKSVCTQHCPELSCAQGEVVVQEPGSCCPICQ) is the VWFC 2 domain. Disulfide bonds link C5047–C5095, C5061–C5112, C5071–C5128, and C5075–C5130. The CTCK domain occupies 5047–5134 (CRHLTELRNL…IHNCHCSACQ (88 aa)). An N-linked (GlcNAc...) asparagine glycan is attached at N5055.

Belongs to the thrombospondin family.

It is found in the secreted. The protein resides in the extracellular space. In terms of biological role, involved in the modulation of neuronal aggregation. May be involved in developmental events during the formation of the central nervous system. This is SCO-spondin from Rattus norvegicus (Rat).